Reading from the N-terminus, the 179-residue chain is UPF0227 protein Swoo_1808 (179 aa).

This sequence belongs to the UPF0227 family.

The sequence is that of UPF0227 protein Swoo_1808 from Shewanella woodyi (strain ATCC 51908 / MS32).